Reading from the N-terminus, the 69-residue chain is MSKLGVVLFVFLLLLPLAAPQPVGDQPADQPADRNAEARARFLHPFQYYTLYRYLTRFLHRYPIYYIRY.

The signal sequence occupies residues 1 to 20 (MSKLGVVLFVFLLLLPLAAP). A propeptide spanning residues 21 to 69 (QPVGDQPADQPADRNAEARARFLHPFQYYTLYRYLTRFLHRYPIYYIRY) is cleaved from the precursor.

It belongs to the conotoxin M superfamily. Conopeptide Y family. As to expression, expressed by the venom duct.

It is found in the secreted. Tyrosine-rich conopeptide that targets several channels/receptors that are expressed in Xenopus oocytes. These targets are the voltage-gated potassium channels Kv1.6/KCNA6 (IC(50) is 170 nM) and Kv1.2/KCNA2 (IC(50) is 2.0 uM), Nav1.2/SCN2A (30% of inhibition), and N-methyl-D-aspartate (NMDA) receptor (GRIN1/GRIN2A/GRIN3B and GRIN1/GRIN2B/GRIN3B) (15% of inhibition). In vivo, causes the marine worm N.virens to move very slowly in contrast to control worms, and causes seizures (at 5 nmol) and death (20 nmol) to mice when intracranially injected. This chain is Conopeptide Y-Pl1, found in Conus planorbis (Planorbis cone).